The sequence spans 101 residues: Protein RALF-like 14 (101 aa).

The signal sequence occupies residues 1–21 (MKLLIFAVIISVVLFPVLVSS). Positions 22–56 (RTIKCDQLSGKCINGEEKEIMNMRLGLDVSSRRIL) are cleaved as a propeptide — removed in mature form. Cysteine 90 and cysteine 96 are joined by a disulfide.

The protein belongs to the plant rapid alkalinization factor (RALF) family. In terms of processing, proteolytically cleaved, probably by S1P, a subtilisin-like serine protease (subtilase).

The protein resides in the secreted. Cell signaling peptide that may regulate plant stress, growth, and development. Mediates a rapid alkalinization of extracellular space by mediating a transient increase in the cytoplasmic Ca(2+) concentration leading to a calcium-dependent signaling events through a cell surface receptor and a concomitant activation of some intracellular mitogen-activated protein kinases. This chain is Protein RALF-like 14 (RALFL14), found in Arabidopsis thaliana (Mouse-ear cress).